The primary structure comprises 432 residues: Amino-acid acetyltransferase (432 aa).

In terms of domain architecture, N-acetyltransferase spans 286–425; it reads EKLREATIED…ASLYNYQRQS (140 aa).

The protein belongs to the acetyltransferase family. ArgA subfamily.

It localises to the cytoplasm. The enzyme catalyses L-glutamate + acetyl-CoA = N-acetyl-L-glutamate + CoA + H(+). The protein operates within amino-acid biosynthesis; L-arginine biosynthesis; N(2)-acetyl-L-ornithine from L-glutamate: step 1/4. In Azotobacter vinelandii (strain DJ / ATCC BAA-1303), this protein is Amino-acid acetyltransferase.